A 211-amino-acid polypeptide reads, in one-letter code: Large ribosomal subunit protein bL25 (211 aa).

Positions G186–G211 are disordered.

It belongs to the bacterial ribosomal protein bL25 family. CTC subfamily. In terms of assembly, part of the 50S ribosomal subunit; part of the 5S rRNA/L5/L18/L25 subcomplex. Contacts the 5S rRNA. Binds to the 5S rRNA independently of L5 and L18.

Functionally, this is one of the proteins that binds to the 5S RNA in the ribosome where it forms part of the central protuberance. The chain is Large ribosomal subunit protein bL25 from Gloeobacter violaceus (strain ATCC 29082 / PCC 7421).